A 170-amino-acid polypeptide reads, in one-letter code: Photosystem I assembly protein Ycf3 (170 aa).

3 TPR repeats span residues 35–68 (AFTH…EIDP), 72–105 (SYIL…NSSL), and 120–153 (GEQA…APSN).

The protein belongs to the Ycf3 family.

The protein localises to the plastid. The protein resides in the chloroplast thylakoid membrane. Its function is as follows. Essential for the assembly of the photosystem I (PSI) complex. May act as a chaperone-like factor to guide the assembly of the PSI subunits. The chain is Photosystem I assembly protein Ycf3 from Anthoceros angustus (Hornwort).